A 93-amino-acid chain; its full sequence is Small ribosomal subunit protein uS19 (93 aa).

Belongs to the universal ribosomal protein uS19 family.

Functionally, protein S19 forms a complex with S13 that binds strongly to the 16S ribosomal RNA. The protein is Small ribosomal subunit protein uS19 of Geotalea daltonii (strain DSM 22248 / JCM 15807 / FRC-32) (Geobacter daltonii).